The primary structure comprises 527 residues: Amine oxidase [flavin-containing] A (527 aa).

Met1 bears the N-acetylmethionine mark. Residues Met1–Ser497 lie on the Cytoplasmic side of the membrane. The residue at position 383 (Ser383) is a Phosphoserine. Cys406 is modified (S-8alpha-FAD cysteine). Residues Val498 to Val518 form a helical; Anchor for type IV membrane protein membrane-spanning segment. Residues Tyr519 to Ser527 are Mitochondrial intermembrane-facing. An interaction with membrane phospholipid headgroups region spans residues Lys520–Arg522.

Belongs to the flavin monoamine oxidase family. As to quaternary structure, monomer, homo- or heterodimer (containing two subunits of similar size). Each subunit contains a covalently bound flavin. Enzymatically active as monomer. FAD is required as a cofactor.

The protein localises to the mitochondrion outer membrane. It carries out the reaction a secondary aliphatic amine + O2 + H2O = a primary amine + an aldehyde + H2O2. It catalyses the reaction a primary methyl amine + O2 + H2O = an aldehyde + H2O2 + NH4(+). The catalysed reaction is (R)-adrenaline + O2 + H2O = (R)-3,4-dihydroxymandelaldehyde + methylamine + H2O2. The enzyme catalyses dopamine + O2 + H2O = 3,4-dihydroxyphenylacetaldehyde + H2O2 + NH4(+). It carries out the reaction tyramine + O2 + H2O = (4-hydroxyphenyl)acetaldehyde + H2O2 + NH4(+). It catalyses the reaction (R)-noradrenaline + O2 + H2O = (R)-3,4-dihydroxymandelaldehyde + H2O2 + NH4(+). The catalysed reaction is serotonin + O2 + H2O = (5-hydroxyindol-3-yl)acetaldehyde + H2O2 + NH4(+). The enzyme catalyses kynuramine + O2 + H2O = 3-(2-aminophenyl)-3-oxopropanal + H2O2 + NH4(+). It carries out the reaction tryptamine + O2 + H2O = indole-3-acetaldehyde + H2O2 + NH4(+). It catalyses the reaction 2-phenylethylamine + O2 + H2O = 2-phenylacetaldehyde + H2O2 + NH4(+). Catalyzes the oxidative deamination of primary and some secondary amine such as neurotransmitters, with concomitant reduction of oxygen to hydrogen peroxide and has important functions in the metabolism of neuroactive and vasoactive amines in the central nervous system and peripheral tissues. Preferentially oxidizes serotonin. Also catalyzes the oxidative deamination of kynuramine to 3-(2-aminophenyl)-3-oxopropanal that can spontaneously condense to 4-hydroxyquinoline. The protein is Amine oxidase [flavin-containing] A of Sus scrofa (Pig).